The sequence spans 476 residues: Adenylosuccinate synthetase, chloroplastic (476 aa).

Residues 1–20 (AAAAAGRGRSFSPAAPAPSS) show a composition bias toward low complexity. A disordered region spans residues 1–34 (AAAAAGRGRSFSPAAPAPSSVRLPGRQAPAPAAA). Residues 63–69 (GDEGKGK) and 91–93 (GHT) contribute to the GTP site. D64 (proton acceptor) is an active-site residue. Residues D64 and G91 each contribute to the Mg(2+) site. IMP is bound by residues 64-67 (DEGK), 89-92 (NAGH), T181, R195, Q275, T290, and R354. H92 serves as the catalytic Proton donor. 350–356 (TTTGRPR) contributes to the substrate binding site. GTP-binding positions include R356, 382-384 (KLD), and 465-467 (GVG).

The protein belongs to the adenylosuccinate synthetase family. As to quaternary structure, homodimer. Mg(2+) serves as cofactor.

It localises to the plastid. It is found in the chloroplast. It catalyses the reaction IMP + L-aspartate + GTP = N(6)-(1,2-dicarboxyethyl)-AMP + GDP + phosphate + 2 H(+). Its pathway is purine metabolism; AMP biosynthesis via de novo pathway; AMP from IMP: step 1/2. In terms of biological role, plays an important role in the de novo pathway and in the salvage pathway of purine nucleotide biosynthesis. Catalyzes the first committed step in the biosynthesis of AMP from IMP. The sequence is that of Adenylosuccinate synthetase, chloroplastic from Triticum aestivum (Wheat).